The following is a 372-amino-acid chain: NAD(P)H-quinone oxidoreductase subunit 1 (372 aa).

A run of 8 helical transmembrane segments spans residues Ile-27–Val-47, Ile-97–Val-117, Val-128–Met-148, Leu-176–Val-196, Ile-204–Leu-224, Ile-266–Val-286, Ser-308–Leu-328, and Phe-347–Pro-367.

This sequence belongs to the complex I subunit 1 family. In terms of assembly, NDH-1 is composed of at least 11 different subunits.

It is found in the cellular thylakoid membrane. The enzyme catalyses a plastoquinone + NADH + (n+1) H(+)(in) = a plastoquinol + NAD(+) + n H(+)(out). It catalyses the reaction a plastoquinone + NADPH + (n+1) H(+)(in) = a plastoquinol + NADP(+) + n H(+)(out). Functionally, NDH-1 shuttles electrons from an unknown electron donor, via FMN and iron-sulfur (Fe-S) centers, to quinones in the respiratory and/or the photosynthetic chain. The immediate electron acceptor for the enzyme in this species is believed to be plastoquinone. Couples the redox reaction to proton translocation, and thus conserves the redox energy in a proton gradient. In Prochlorococcus marinus (strain MIT 9215), this protein is NAD(P)H-quinone oxidoreductase subunit 1.